The sequence spans 471 residues: Cysteine--tRNA ligase (471 aa).

C29 contacts Zn(2+). The 'HIGH' region signature appears at 31 to 41; sequence PTVYNYIHIGN. Zn(2+)-binding residues include C209, H234, and E238. The short motif at 266-270 is the 'KMSKS' region element; that stretch reads KMSKS. K269 lines the ATP pocket.

The protein belongs to the class-I aminoacyl-tRNA synthetase family. Monomer. Zn(2+) is required as a cofactor.

The protein resides in the cytoplasm. It carries out the reaction tRNA(Cys) + L-cysteine + ATP = L-cysteinyl-tRNA(Cys) + AMP + diphosphate. The protein is Cysteine--tRNA ligase of Listeria innocua serovar 6a (strain ATCC BAA-680 / CLIP 11262).